The chain runs to 212 residues: Uracil phosphoribosyltransferase (212 aa).

5-phospho-alpha-D-ribose 1-diphosphate-binding positions include Arg-78, Arg-103, and 130–138 (DPMLATGGS). Uracil-binding positions include Ile-193 and 198–200 (GDA). Position 199 (Asp-199) interacts with 5-phospho-alpha-D-ribose 1-diphosphate.

This sequence belongs to the UPRTase family. Mg(2+) serves as cofactor.

The enzyme catalyses UMP + diphosphate = 5-phospho-alpha-D-ribose 1-diphosphate + uracil. It functions in the pathway pyrimidine metabolism; UMP biosynthesis via salvage pathway; UMP from uracil: step 1/1. Its activity is regulated as follows. Allosterically activated by GTP. Functionally, catalyzes the conversion of uracil and 5-phospho-alpha-D-ribose 1-diphosphate (PRPP) to UMP and diphosphate. The protein is Uracil phosphoribosyltransferase of Pseudomonas aeruginosa (strain LESB58).